We begin with the raw amino-acid sequence, 240 residues long: MTTNDAGRIPSAAGGAELAALYRLLTWLSPAFPIGGFSYSSGLEWAVEAGDICDAAALRGWLATMLTDGSGFCDAAFLVHAHRATELDDIKRLSEVAELAAAFVPSRERQLETAAQGRAFIEIARSAWSCAGLDEAVAQCDVVVYPVAVGMVGALHGVPLEPLLHGFLHALVSNWISAGSRLVPLGQTDSQRVLAALEPVVVATADRSLHASLDDIGSATFRADLASLRHETQYTRLFRS.

This sequence belongs to the UreF family. UreD, UreF and UreG form a complex that acts as a GTP-hydrolysis-dependent molecular chaperone, activating the urease apoprotein by helping to assemble the nickel containing metallocenter of UreC. The UreE protein probably delivers the nickel.

Its subcellular location is the cytoplasm. Required for maturation of urease via the functional incorporation of the urease nickel metallocenter. The chain is Urease accessory protein UreF from Bradyrhizobium sp. (strain ORS 278).